The chain runs to 363 residues: 3-isopropylmalate dehydrogenase (363 aa).

78–91 (GPKWENLPPESQPE) is a binding site for NAD(+). Substrate-binding residues include arginine 99, arginine 109, arginine 138, and aspartate 227. Mg(2+)-binding residues include aspartate 227, aspartate 251, and aspartate 255. Position 285-297 (285-297 (GSAPDIAGKNIAN)) interacts with NAD(+).

It belongs to the isocitrate and isopropylmalate dehydrogenases family. LeuB type 1 subfamily. Homodimer. Mg(2+) is required as a cofactor. The cofactor is Mn(2+).

It localises to the cytoplasm. It catalyses the reaction (2R,3S)-3-isopropylmalate + NAD(+) = 4-methyl-2-oxopentanoate + CO2 + NADH. It functions in the pathway amino-acid biosynthesis; L-leucine biosynthesis; L-leucine from 3-methyl-2-oxobutanoate: step 3/4. Functionally, catalyzes the oxidation of 3-carboxy-2-hydroxy-4-methylpentanoate (3-isopropylmalate) to 3-carboxy-4-methyl-2-oxopentanoate. The product decarboxylates to 4-methyl-2 oxopentanoate. In Salmonella choleraesuis (strain SC-B67), this protein is 3-isopropylmalate dehydrogenase.